The primary structure comprises 156 residues: MPRRGAVPKREVLPDPVYQSKVLTKLINQVMLKGKKSLAESIVYGAMDIIKEKTGKNPLEVFETAMKNVMPVLEVKARRVGGANYQVPVEVRHDRRQTLAIRWLTNYARERAGKSMKEKLANEIMDAAAGTGGAVKKKEDTHKMAEANKAFAHYRW.

It belongs to the universal ribosomal protein uS7 family. In terms of assembly, part of the 30S ribosomal subunit. Contacts proteins S9 and S11.

In terms of biological role, one of the primary rRNA binding proteins, it binds directly to 16S rRNA where it nucleates assembly of the head domain of the 30S subunit. Is located at the subunit interface close to the decoding center, probably blocks exit of the E-site tRNA. This chain is Small ribosomal subunit protein uS7, found in Pelotomaculum thermopropionicum (strain DSM 13744 / JCM 10971 / SI).